A 293-amino-acid chain; its full sequence is 4-diphosphocytidyl-2-C-methyl-D-erythritol kinase (293 aa).

Residue Lys10 is part of the active site. Residue 96 to 106 (PVASGIGGGSS) participates in ATP binding. Asp138 is an active-site residue.

This sequence belongs to the GHMP kinase family. IspE subfamily.

The enzyme catalyses 4-CDP-2-C-methyl-D-erythritol + ATP = 4-CDP-2-C-methyl-D-erythritol 2-phosphate + ADP + H(+). It participates in isoprenoid biosynthesis; isopentenyl diphosphate biosynthesis via DXP pathway; isopentenyl diphosphate from 1-deoxy-D-xylulose 5-phosphate: step 3/6. Its function is as follows. Catalyzes the phosphorylation of the position 2 hydroxy group of 4-diphosphocytidyl-2C-methyl-D-erythritol. In Chelativorans sp. (strain BNC1), this protein is 4-diphosphocytidyl-2-C-methyl-D-erythritol kinase.